The chain runs to 713 residues: Putative ERAD-associated E3 ubiquitin-protein ligase component (713 aa).

Positions 1–20 (MQLLNFLICLFFIFKRCVFT) are cleaved as a signal peptide. N-linked (GlcNAc...) asparagine glycosylation is found at asparagine 48 and asparagine 123. 2 Sel1-like repeats span residues 83–124 (PESQ…TQNY) and 125–160 (TYAL…HQIS). Asparagine 211 is a glycosylation site (N-linked (GlcNAc...) asparagine). 4 Sel1-like repeats span residues 212–248 (ISAH…RLVN), 280–315 (SIAA…SLNH), 490–525 (IHSL…AIHP), and 527–562 (ALAY…MHDT). N-linked (GlcNAc...) asparagine glycosylation is present at asparagine 314. The tract at residues 621-655 (QLPPEPPTLQVDRTPQQPDPQETSESLPSPNTEEM) is disordered. Residues 631–652 (VDRTPQQPDPQETSESLPSPNT) show a composition bias toward polar residues. Residues 671–691 (GRFLETACVTLIVVVVGLVLM) traverse the membrane as a helical segment.

The protein belongs to the sel-1 family.

The protein resides in the endoplasmic reticulum membrane. Functionally, component of the endoplasmic reticulum quality control (ERQC) system involved in ubiquitin-dependent degradation of missfolded endoplasmic reticulum proteins. In Schizosaccharomyces pombe (strain 972 / ATCC 24843) (Fission yeast), this protein is Putative ERAD-associated E3 ubiquitin-protein ligase component.